A 699-amino-acid polypeptide reads, in one-letter code: Protein Scribble homolog let-413 (699 aa).

LRR repeat units lie at residues 37-59 (KLED…FSLR), 60-81 (HLRI…IGNL), 83-104 (QLIE…MQNC), 106-127 (LLTT…ICEC), 129-150 (SITI…IGSL), 152-174 (NLRV…VELR), 175-196 (KLEE…IGKL), 198-219 (SLRE…ISGC), 221-242 (MLDQ…LGRM), 244-265 (NLTD…FGEL), 267-288 (RLQM…IGKC), 290-311 (SLTE…IGDL), 313-334 (QLTT…IGNC), 336-357 (SLTV…IGKC), 359-380 (NLTV…VKVL), and 382-403 (KLQA…SETR). One can recognise a PDZ domain in the interval 584 to 665 (AGGTSNDPAP…RSPSPVSRTS (82 aa)). The disordered stretch occupies residues 656-699 (RSPSPVSRTSEPSLNGSSHQLNHFDAGSPDSTMFVTSSTPVYAS). 2 stretches are compositionally biased toward polar residues: residues 659–676 (SPVS…SHQL) and 684–699 (PDST…VYAS).

This sequence belongs to the LAP (LRR and PDZ) protein family. As to expression, expressed in the terminal web of the intestine. Expressed in seam cells. Expressed in the basolateral surfaces of epithelia and the nervous system. Expressed in the intestine, epidermis, excretory canal, reproductive system including vulva, uterus and spermatheca, in both larval and adult stage animals.

Its subcellular location is the basolateral cell membrane. In terms of biological role, critical role in assembling adherens junctions; adapter protein involved in polarizing protein trafficking in epithelial cells. Necessary to maintain, not establish, the entire terminal web (organelle-depleted, intermediate filament-rich layer of cytoplasm that underlies the apical microvilli of polarized epithelial cells) or brush border assembly at the apical surface gut cells. Required for correct localization of ifb-2 intermediate filaments in the terminal web. Required for dlg-1 and hmr-1 lateral localization. Maintains cell polarity by correctly positioning adherens junction protein components including ajm-1 and hmp-1 at discrete subapical positions. Plays a role in the correct localization of the dlg-1-ajm-1 complex, polarity protein par-3, and actin microfilament to the apical junction of spermatheca cells, and is required for ovulation. Regulates the establishment of newly-formed epithelia in conjunction with dlg-1. Required in the epidermis during larval development. Plays a role in cellular junction integrity and in the directed outgrowth of seam cells, towards neighboring seam cells, during larval development; probably acts by promoting the assembly and stability of dlg-1 at apical junctions. This chain is Protein Scribble homolog let-413, found in Caenorhabditis elegans.